Consider the following 326-residue polypeptide: Phosphate acyltransferase (326 aa).

This sequence belongs to the PlsX family. As to quaternary structure, homodimer. Probably interacts with PlsY.

It localises to the cytoplasm. The enzyme catalyses a fatty acyl-[ACP] + phosphate = an acyl phosphate + holo-[ACP]. Its pathway is lipid metabolism; phospholipid metabolism. Catalyzes the reversible formation of acyl-phosphate (acyl-PO(4)) from acyl-[acyl-carrier-protein] (acyl-ACP). This enzyme utilizes acyl-ACP as fatty acyl donor, but not acyl-CoA. In Macrococcus caseolyticus (strain JCSC5402) (Macrococcoides caseolyticum), this protein is Phosphate acyltransferase.